A 402-amino-acid chain; its full sequence is Phosphoglycerate kinase (402 aa).

Substrate is bound by residues 29 to 31, Arg45, 69 to 72, Arg125, and Arg158; these read DFN and HLGR. ATP-binding positions include Lys209, Glu331, and 357–360; that span reads GGDT.

It belongs to the phosphoglycerate kinase family.

The protein resides in the cytoplasm. It catalyses the reaction (2R)-3-phosphoglycerate + ATP = (2R)-3-phospho-glyceroyl phosphate + ADP. Its pathway is carbohydrate degradation; glycolysis; pyruvate from D-glyceraldehyde 3-phosphate: step 2/5. The protein is Phosphoglycerate kinase (pgk) of Helicobacter pylori (strain J99 / ATCC 700824) (Campylobacter pylori J99).